The primary structure comprises 504 residues: Glucose-6-phosphate isomerase (504 aa).

Catalysis depends on Glu-333, which acts as the Proton donor. Catalysis depends on residues His-364 and Lys-473.

The protein belongs to the GPI family.

The protein localises to the cytoplasm. The catalysed reaction is alpha-D-glucose 6-phosphate = beta-D-fructose 6-phosphate. Its pathway is carbohydrate biosynthesis; gluconeogenesis. It functions in the pathway carbohydrate degradation; glycolysis; D-glyceraldehyde 3-phosphate and glycerone phosphate from D-glucose: step 2/4. Catalyzes the reversible isomerization of glucose-6-phosphate to fructose-6-phosphate. This is Glucose-6-phosphate isomerase from Xanthomonas oryzae pv. oryzae (strain MAFF 311018).